The sequence spans 225 residues: Phosphoserine phosphatase (225 aa).

An N-acetylmethionine modification is found at M1. D20 acts as the Nucleophile in catalysis. The Mg(2+) site is built by D20 and D22. 20 to 22 is an L-serine binding site; the sequence is DVD. The Proton donor role is filled by D22. M52 provides a ligand contact to O-phospho-L-serine. G53 contributes to the phosphate binding site. Residues 109–111 and K158 each bind L-serine; that span reads SGG. Residues 109–111 and K158 each bind O-phospho-L-serine; that span reads SGG. D179 is a binding site for Mg(2+). Residue T182 participates in O-phospho-L-serine binding. T182 provides a ligand contact to phosphate.

Belongs to the HAD-like hydrolase superfamily. SerB family. Homodimer. The cofactor is Mg(2+).

The protein localises to the cytoplasm. It localises to the cytosol. It carries out the reaction O-phospho-L-serine + H2O = L-serine + phosphate. The enzyme catalyses O-phospho-D-serine + H2O = D-serine + phosphate. Its pathway is amino-acid biosynthesis; L-serine biosynthesis; L-serine from 3-phospho-D-glycerate: step 3/3. Functionally, catalyzes the last irreversible step in the biosynthesis of L-serine from carbohydrates, the dephosphorylation of O-phospho-L-serine to L-serine. L-serine can then be used in protein synthesis, to produce other amino acids, in nucleotide metabolism or in glutathione synthesis, or can be racemized to D-serine, a neuromodulator. May also act on O-phospho-D-serine. The protein is Phosphoserine phosphatase of Bos taurus (Bovine).